The sequence spans 372 residues: MKYDLIIIGSGSVGAAAGYYATRAGLKVLMTDAHMPPHQQGSHHGDTRLIRHAYGEGEKYVPLVLRAQTLWDELSTHNEEPIFVRSGVVNLGPADSAFLANVARSAQQWQLNVERLDATALMTRWPEIRVPDNYIGLFEADSGFLRSELAITTWLRLAREAGCAQLFNSPVSHIHHDDNGVTIETSEGCYHASKALISAGTWVKALVPELPVQPVRKVFAWFKADGRYSTKNRFPAFTGEMPNGDQYYGFPAENDELKIGKHNGGQLIQAPEERKPFAAVASDGAEAFPFLRNVLPGIGGCLHGAACTYDNSPDEDFIIDTLPGHENTLVITGLSGHGFKFAPVLGEIAADFALGKTPSFDLTPFRLSRFSQ.

Position 4–34 (4–34 (DLIIIGSGSVGAAAGYYATRAGLKVLMTDAH)) interacts with FAD. At C307 the chain carries S-8alpha-FAD cysteine.

The protein belongs to the MSOX/MTOX family. MTOX subfamily. As to quaternary structure, monomer. Requires FAD as cofactor.

It carries out the reaction N(alpha)-methyl-L-tryptophan + O2 + H2O = L-tryptophan + formaldehyde + H2O2. Its function is as follows. Catalyzes the oxidative demethylation of N-methyl-L-tryptophan. This is N-methyl-L-tryptophan oxidase from Salmonella typhimurium (strain LT2 / SGSC1412 / ATCC 700720).